The following is a 396-amino-acid chain: Large ribosomal subunit protein uL4A (396 aa).

A compositionally biased stretch (basic and acidic residues) spans 352-373 (KAKEKKPDDGKPKAKKPLDAKT). Positions 352–374 (KAKEKKPDDGKPKAKKPLDAKTK) are disordered.

Belongs to the universal ribosomal protein uL4 family. In terms of assembly, component of the large ribosomal subunit.

It localises to the cytoplasm. In terms of biological role, component of the large ribosomal subunit. The ribosome is a large ribonucleoprotein complex responsible for the synthesis of proteins in the cell. In Xenopus laevis (African clawed frog), this protein is Large ribosomal subunit protein uL4A (rpl4-a).